The chain runs to 174 residues: Co-chaperone protein HscB homolog (174 aa).

The 73-residue stretch at 2 to 74 (NYFELFKFPP…IRRAEHMLSL (73 aa)) folds into the J domain.

Belongs to the HscB family. In terms of assembly, interacts with HscA and stimulates its ATPase activity.

In terms of biological role, co-chaperone involved in the maturation of iron-sulfur cluster-containing proteins. Seems to help targeting proteins to be folded toward HscA. The protein is Co-chaperone protein HscB homolog of Shewanella oneidensis (strain ATCC 700550 / JCM 31522 / CIP 106686 / LMG 19005 / NCIMB 14063 / MR-1).